Consider the following 555-residue polypeptide: Tau-cadinol synthase (555 aa).

Arginine 270, aspartate 307, aspartate 311, arginine 448, and aspartate 451 together coordinate (2E,6E)-farnesyl diphosphate. Residues aspartate 307 and aspartate 311 each coordinate Mg(2+). Residues 307-311 carry the DDXXD motif motif; it reads DDTYD. Mg(2+)-binding residues include aspartate 451, serine 455, and glutamate 459.

This sequence belongs to the terpene synthase family. Mg(2+) serves as cofactor.

It catalyses the reaction (2E,6E)-farnesyl diphosphate + H2O = tau-cadinol + diphosphate. It carries out the reaction (2E,6E)-farnesyl diphosphate = (+)-gamma-cadinene + diphosphate. It functions in the pathway secondary metabolite biosynthesis; terpenoid biosynthesis. Sesquiterpene synthase that catalyzes the formation of sesquiterpenes and sesquiterpenoid alcohols. Converts farnesyl diphosphate (FPP) to tau-cadinol. Converts FPP to gamma-cadinene. Tau-cadinol is the major product. In Lavandula angustifolia (Lavender), this protein is Tau-cadinol synthase.